The sequence spans 171 residues: Ribosome maturation factor RimM (171 aa).

Residues 96-170 enclose the PRC barrel domain; it reads AEGEYYYHEI…LVTIHVMEGL (75 aa).

This sequence belongs to the RimM family. Binds ribosomal protein uS19.

It is found in the cytoplasm. Functionally, an accessory protein needed during the final step in the assembly of 30S ribosomal subunit, possibly for assembly of the head region. Essential for efficient processing of 16S rRNA. May be needed both before and after RbfA during the maturation of 16S rRNA. It has affinity for free ribosomal 30S subunits but not for 70S ribosomes. In Bacillus mycoides (strain KBAB4) (Bacillus weihenstephanensis), this protein is Ribosome maturation factor RimM.